The chain runs to 401 residues: Coenzyme A biosynthesis bifunctional protein CoaBC (401 aa).

A phosphopantothenoylcysteine decarboxylase region spans residues 1 to 190 (MQTLAGKKIL…FQPKPLQDKS (190 aa)). The active-site Proton donor is the Cys159. A phosphopantothenate--cysteine ligase region spans residues 191 to 401 (ILITAGPTRE…LKQIQTLMGH (211 aa)). CTP is bound by residues Asp279, Lys289, 307–310 (PDIV), Phe326, Lys340, and Lys344.

In the N-terminal section; belongs to the HFCD (homo-oligomeric flavin containing Cys decarboxylase) superfamily. The protein in the C-terminal section; belongs to the PPC synthetase family. Mg(2+) is required as a cofactor. Requires FMN as cofactor.

The enzyme catalyses N-[(R)-4-phosphopantothenoyl]-L-cysteine + H(+) = (R)-4'-phosphopantetheine + CO2. It catalyses the reaction (R)-4'-phosphopantothenate + L-cysteine + CTP = N-[(R)-4-phosphopantothenoyl]-L-cysteine + CMP + diphosphate + H(+). Its pathway is cofactor biosynthesis; coenzyme A biosynthesis; CoA from (R)-pantothenate: step 2/5. The protein operates within cofactor biosynthesis; coenzyme A biosynthesis; CoA from (R)-pantothenate: step 3/5. Functionally, catalyzes two sequential steps in the biosynthesis of coenzyme A. In the first step cysteine is conjugated to 4'-phosphopantothenate to form 4-phosphopantothenoylcysteine. In the second step the latter compound is decarboxylated to form 4'-phosphopantotheine. The polypeptide is Coenzyme A biosynthesis bifunctional protein CoaBC (Vibrio vulnificus (strain CMCP6)).